The sequence spans 287 residues: Protein HEXIM2 (287 aa).

Disordered stretches follow at residues 1-212 and 266-287; these read MKDW…RSKE and RLRQ…QPGS. A Phosphoserine modification is found at Ser31. 2 positions are modified to phosphothreonine: Thr34 and Thr48. Residues Ser53, Ser55, Ser73, Ser78, and Ser83 each carry the phosphoserine modification. Positions 89-105 are enriched in basic residues; sequence ARKKHRRRPSKRKRHWR. Residues 115-134 are compositionally biased toward basic and acidic residues; sequence KQQRDERQSQRASRVREEMF. Residues 142–145 are interaction with P-TEFb; that stretch reads PYNT. Composition is skewed to basic and acidic residues over residues 181 to 212 and 266 to 280; these read GQGR…RSKE and RLRQ…EGGR. Residues 208–278 are a coiled coil; sequence GRSKEELVRD…QENEMWNREG (71 aa). Residues 227–287 form an interaction with CCNT1, HEXIM1 and HEXIM2 region; the sequence is QAEEEMRRLR…GGRRGGQPGS (61 aa).

This sequence belongs to the HEXIM family. Homooligomer and heterooligomer with HEXIM1; probably dimeric. Core component of the 7SK RNP complex, at least composed of 7SK RNA, LARP7, MEPCE, HEXIM1 (or HEXIM2) and P-TEFb (composed of CDK9 and CCNT1/cyclin-T1). Interacts with CCNT2.

Its subcellular location is the nucleus. Its function is as follows. Transcriptional regulator which functions as a general RNA polymerase II transcription inhibitor. Core component of the 7SK RNP complex: in cooperation with 7SK snRNA sequesters P-TEFb in a large inactive 7SK snRNP complex preventing RNA polymerase II phosphorylation and subsequent transcriptional elongation. This is Protein HEXIM2 (HEXIM2) from Bos taurus (Bovine).